The primary structure comprises 339 residues: Endo-beta-N-acetylglucosaminidase F1 (339 aa).

The or 51, or 52 signal peptide spans 1-50 (MKKFINQFSASLKNNILVFLAFPFVWTSCARDNPLSSENSNISPNAAARA). A GH18 domain is found at 60–326 (IKLFSFTEVN…KLIAKELYGD (267 aa)). Glutamate 182 (proton donor) is an active-site residue. Position 339 (tryptophan 339) is a propeptide, removed in mature form.

It belongs to the glycosyl hydrolase 18 family. As to quaternary structure, monomer.

It localises to the secreted. The catalysed reaction is an N(4)-(oligosaccharide-(1-&gt;3)-[oligosaccharide-(1-&gt;6)]-beta-D-Man-(1-&gt;4)-beta-D-GlcNAc-(1-&gt;4)-alpha-D-GlcNAc)-L-asparaginyl-[protein] + H2O = an oligosaccharide-(1-&gt;3)-[oligosaccharide-(1-&gt;6)]-beta-D-Man-(1-&gt;4)-D-GlcNAc + N(4)-(N-acetyl-beta-D-glucosaminyl)-L-asparaginyl-[protein]. Functionally, endohydrolysis of the di-N-acetylchitobiosyl unit in high-mannose glycopeptides and glycoproteins. Does not hydrolyze complex bi- or triantennary glycans. The presence of a core-bound fucose impedes endo F1 hydrolysis. This is Endo-beta-N-acetylglucosaminidase F1 (endOF1) from Elizabethkingia meningoseptica (Chryseobacterium meningosepticum).